The primary structure comprises 850 residues: Lon protease (850 aa).

One can recognise a Lon N-terminal domain in the interval L38–I232. Residue G384–T391 participates in ATP binding. The Lon proteolytic domain maps to E634–R815. Catalysis depends on residues S721 and K764. Residues P819–H850 form a disordered region. Residues K821–S840 show a composition bias toward basic residues. A compositionally biased stretch (polar residues) spans R841 to H850.

Belongs to the peptidase S16 family. Homohexamer. Organized in a ring with a central cavity.

Its subcellular location is the cytoplasm. The enzyme catalyses Hydrolysis of proteins in presence of ATP.. Its function is as follows. ATP-dependent serine protease that mediates the selective degradation of mutant and abnormal proteins as well as certain short-lived regulatory proteins. Required for cellular homeostasis and for survival from DNA damage and developmental changes induced by stress. Degrades polypeptides processively to yield small peptide fragments that are 5 to 10 amino acids long. Binds to DNA in a double-stranded, site-specific manner. This is Lon protease from Xanthomonas oryzae pv. oryzae (strain KACC10331 / KXO85).